The chain runs to 407 residues: Arylacetamide deacetylase-like 3 (407 aa).

The Involved in the stabilization of the negatively charged intermediate by the formation of the oxyanion hole signature appears at 119 to 121 (HGG). Catalysis depends on residues serine 193, aspartate 347, and histidine 377.

It belongs to the 'GDXG' lipolytic enzyme family.

The chain is Arylacetamide deacetylase-like 3 (AADACL3) from Homo sapiens (Human).